The chain runs to 316 residues: tRNA dimethylallyltransferase (316 aa).

Position 17–24 (17–24 (GPTASGKT)) interacts with ATP. 19-24 (TASGKT) is a binding site for substrate. 4 interaction with substrate tRNA regions span residues 42 to 45 (DSAL), 166 to 170 (QRLSR), 247 to 252 (RCVGYR), and 280 to 287 (KRQITWLR).

Belongs to the IPP transferase family. Monomer. Requires Mg(2+) as cofactor.

It catalyses the reaction adenosine(37) in tRNA + dimethylallyl diphosphate = N(6)-dimethylallyladenosine(37) in tRNA + diphosphate. In terms of biological role, catalyzes the transfer of a dimethylallyl group onto the adenine at position 37 in tRNAs that read codons beginning with uridine, leading to the formation of N6-(dimethylallyl)adenosine (i(6)A). The sequence is that of tRNA dimethylallyltransferase from Escherichia coli O127:H6 (strain E2348/69 / EPEC).